The primary structure comprises 190 residues: MQLLKKRILQDGKCYEGGILKVDGFINHQMDPVLMKSIGVEFVRRFAATNVNKIMTIEASGIAPAIMTGYLMDLPVVFAKKKSPKTIQNALSTTVHSFTKDRDYEVVISADFLTPNDNVLFVDDFLAYGNAALGILDLIEQSGAKLVGMGFIIEKAFQNGRKILEEKGVRVESLAIIEDLSNCCIKIKDQ.

2 residues coordinate xanthine: L20 and N27. 127-131 (AYGNA) contacts 5-phospho-alpha-D-ribose 1-diphosphate. K155 is a binding site for xanthine.

It belongs to the purine/pyrimidine phosphoribosyltransferase family. Xpt subfamily. In terms of assembly, homodimer.

It is found in the cytoplasm. It catalyses the reaction XMP + diphosphate = xanthine + 5-phospho-alpha-D-ribose 1-diphosphate. The protein operates within purine metabolism; XMP biosynthesis via salvage pathway; XMP from xanthine: step 1/1. Its function is as follows. Converts the preformed base xanthine, a product of nucleic acid breakdown, to xanthosine 5'-monophosphate (XMP), so it can be reused for RNA or DNA synthesis. This is Xanthine phosphoribosyltransferase from Bacteroides thetaiotaomicron (strain ATCC 29148 / DSM 2079 / JCM 5827 / CCUG 10774 / NCTC 10582 / VPI-5482 / E50).